The chain runs to 138 residues: Small ribosomal subunit protein uS11c (138 aa).

The segment at 1–23 is disordered; that stretch reads MAKTIPRIGSRKNGRIGSRKNTR. Over residues 9-23 the composition is skewed to basic residues; sequence GSRKNGRIGSRKNTR.

The protein belongs to the universal ribosomal protein uS11 family. Part of the 30S ribosomal subunit.

Its subcellular location is the plastid. The protein resides in the chloroplast. This chain is Small ribosomal subunit protein uS11c, found in Daucus carota (Wild carrot).